The primary structure comprises 155 residues: Chromosomal passenger complex protein bir-1 (155 aa).

Residues 20–87 (RLMTFKNFEY…KRDEPCEFVR (68 aa)) form a BIR repeat. Zn(2+) contacts are provided by Cys-57, Cys-60, His-76, and Cys-83.

Belongs to the IAP family. As to quaternary structure, component of the CPC complex which consists of icp-1; csc-1; bir-1 and air-2. Within the complex, interacts with csc-1, icp-1 and air-2. Interacts with csc-1 in a zinc-dependent-manner; the interaction is direct. Expressed in oocytes and sperm.

The protein resides in the chromosome. It localises to the cytoplasm. It is found in the cytoskeleton. The protein localises to the spindle. Its subcellular location is the midbody. Component of the chromosomal passenger complex (CPC), a complex that acts as a key regulator of chromosome segregation and cytokinesis. The CPC complex has essential functions at the centromere in ensuring correct chromosome condensation, alignment and segregation. In the complex, required to direct the Aurora B/air-2 kinase to chromosomes. Also functions in spindle midzone formation and in the formation of polar bodies during oogenesis. Required for the localization of the kinetochore component hcp-1 to chromosomes. Involved in the positive regulation of transcription. Involved in the transcriptional regulation of collagen genes. The protein is Chromosomal passenger complex protein bir-1 of Caenorhabditis elegans.